The following is a 715-amino-acid chain: Zinc finger protein 544 (715 aa).

In terms of domain architecture, KRAB spans 14–85 (VCFEDVAMAF…EQEAPRDWKA (72 aa)). Glycyl lysine isopeptide (Lys-Gly) (interchain with G-Cter in SUMO2) cross-links involve residues Lys-273 and Lys-289. The segment at 354–374 (SVCNQCGKSFSCCKLIHQRTH) adopts a C2H2-type 1; atypical zinc-finger fold. 12 consecutive C2H2-type zinc fingers follow at residues 380–402 (FECTQCGKSFSQSYDLVIHQRTH), 408–430 (YECDLCGKSFTQRSKLITHQRIH), 436–458 (YQCIECRKSFRWNSNLIVHQRIH), 464–486 (YECTHCGKSFSQSYELVTHKRTH), 492–514 (FKCTQCGKSFSQKYDLVVHQRTH), 520–542 (YECNLCGKSFSQSSKLITHQRIH), 548–570 (YQCIECGKSFRWNSNLVIHQRIH), 576–598 (YDCTHCGKSFSQSYQLVAHKRTH), 604–626 (YECNECGKAFNRSTQLIRHLQIH), 632–654 (YKCNQCNKAFARSSYLVMHQRTH), 660–682 (FECSQCGKAFSGSSNLLSHHRIH), and 688–710 (YECSDCGKSFRQQSQLVVHRRTH). Lys-534 participates in a covalent cross-link: Glycyl lysine isopeptide (Lys-Gly) (interchain with G-Cter in SUMO2).

It belongs to the krueppel C2H2-type zinc-finger protein family.

It is found in the nucleus. Functionally, may be involved in transcriptional regulation. The chain is Zinc finger protein 544 (ZNF544) from Homo sapiens (Human).